The chain runs to 270 residues: Nuclease PA3 (270 aa).

Trp-1, His-6, His-15, Asp-45, and His-60 together coordinate a divalent metal cation. A substrate-binding site is contributed by 1–6 (WGALGH). Residues 45 to 51 (DEYRLTS), 60 to 63 (HFID), and 73 to 78 (NVDYER) each bind substrate. 2 cysteine pairs are disulfide-bonded: Cys-72–Cys-217 and Cys-80–Cys-85. Asn-92 is a substrate binding site. A glycan (N-linked (GlcNAc...) asparagine) is linked at Asn-92. A divalent metal cation is bound by residues His-116, Asp-120, and His-126. The segment at 116–164 (HFIGDMTQPLHDEAYAVGGNKINVTFDGYHDNLHSDWDTYMPQKLIGGH) is substrate binding. N-linked (GlcNAc...) asparagine glycosylation is present at Asn-138. Residues His-149 and Asp-153 each contribute to the a divalent metal cation site. N-linked (GlcNAc...) asparagine glycosylation is found at Asn-184 and Asn-197.

It belongs to the nuclease type I family. The cofactor is Zn(2+).

The protein localises to the secreted. The enzyme catalyses a ribonucleoside 3'-phosphate + H2O = a ribonucleoside + phosphate. Hydrolyzes only single-stranded DNA and RNA without apparent specificity for bases. This chain is Nuclease PA3, found in Penicillium sp.